Here is a 372-residue protein sequence, read N- to C-terminus: Silphinene synthase peniA (372 aa).

Aspartate 116, glutamate 121, asparagine 263, serine 267, and glutamate 271 together coordinate Mg(2+). The short motif at 116-121 (DDQFDE) is the DDXXE motif element.

The protein belongs to the terpene synthase family. The cofactor is Mg(2+).

The catalysed reaction is (2E,6E)-farnesyl diphosphate = silphinene + diphosphate. It functions in the pathway secondary metabolite biosynthesis; terpenoid biosynthesis. Its function is as follows. Sesquiterpene cyclase; part of the gene cluster that mediates the biosynthesis of penifulvin A, a potent insecticidal sesquiterpene that features a [5.5.5.6]dioxafenestrane ring. Within the pathway, peniA catalyzes the first step and generates the angular triquinane scaffold silphinene via cyclization of the linear farnesyl pyrophosphate (FPP). The cytochrome P450 monooxygenase peniB and the flavin-dependent monooxygenase peniC then catalyze a series of oxidation reactions to transform silphinene into penifulvin A. The sequence is that of Silphinene synthase peniA from Penicillium patulum (Penicillium griseofulvum).